The primary structure comprises 328 residues: P2Y purinoceptor 3 (328 aa).

Residues 1-22 (MSMANFTGGRNSCTFHEEFKQV) are Extracellular-facing. Asparagine 5 carries an N-linked (GlcNAc...) asparagine glycan. Residues 23-43 (LLPLVYSVVFLLGLPLNAVVI) traverse the membrane as a helical segment. The Cytoplasmic segment spans residues 44 to 57 (GQIWLARKALTRTT). The helical transmembrane segment at 58-78 (IYMLNLAMADLLYVCSLPLLI) threads the bilayer. Topologically, residues 79–96 (YNYTQKDYWPFGDFTCKF) are extracellular. An intrachain disulfide couples cysteine 94 to cysteine 172. The chain crosses the membrane as a helical span at residues 97–117 (VRFQFYTNLHGSILFLTCISV). At 118 to 139 (QRYMGICHPLASWHKKKGKKLT) the chain is on the cytoplasmic side. Residues 140–160 (WLVCAAVWFIVIAQCLPTFVF) form a helical membrane-spanning segment. Topologically, residues 161–189 (ASTGTQRNRTVCYDLSPPDRSTSYFPYGI) are extracellular. A helical transmembrane segment spans residues 190–210 (TLTITGFLLPFAAILACYCSM). The Cytoplasmic portion of the chain corresponds to 211–231 (ARILCQKDELIGLAVHKKKDK). A helical membrane pass occupies residues 232–252 (AVRMIIIVVIVFSISFFPFHL). Over 253–275 (TKTIYLIVRSSASLPCPTLQAFA) the chain is Extracellular. The chain crosses the membrane as a helical span at residues 276–298 (IAYKCTRPFASMNSVLDPILFYF). At 299–323 (TQRKFRESTRYLLDKMSSKWRQDHC) the chain is on the cytoplasmic side.

This sequence belongs to the G-protein coupled receptor 1 family.

The protein resides in the cell membrane. Functionally, receptor for extracellular ADP &gt; UTP &gt; ATP = UDP. The activity of this receptor is mediated by G proteins which activate a phosphatidylinositol-calcium second messenger system. This chain is P2Y purinoceptor 3 (P2RY3), found in Gallus gallus (Chicken).